The following is a 556-amino-acid chain: 2-succinyl-5-enolpyruvyl-6-hydroxy-3-cyclohexene-1-carboxylate synthase (556 aa).

It belongs to the TPP enzyme family. MenD subfamily. Homodimer. Mg(2+) is required as a cofactor. Requires Mn(2+) as cofactor. It depends on thiamine diphosphate as a cofactor.

It carries out the reaction isochorismate + 2-oxoglutarate + H(+) = 5-enolpyruvoyl-6-hydroxy-2-succinyl-cyclohex-3-ene-1-carboxylate + CO2. The protein operates within quinol/quinone metabolism; 1,4-dihydroxy-2-naphthoate biosynthesis; 1,4-dihydroxy-2-naphthoate from chorismate: step 2/7. It participates in quinol/quinone metabolism; menaquinone biosynthesis. Functionally, catalyzes the thiamine diphosphate-dependent decarboxylation of 2-oxoglutarate and the subsequent addition of the resulting succinic semialdehyde-thiamine pyrophosphate anion to isochorismate to yield 2-succinyl-5-enolpyruvyl-6-hydroxy-3-cyclohexene-1-carboxylate (SEPHCHC). The polypeptide is 2-succinyl-5-enolpyruvyl-6-hydroxy-3-cyclohexene-1-carboxylate synthase (Escherichia fergusonii (strain ATCC 35469 / DSM 13698 / CCUG 18766 / IAM 14443 / JCM 21226 / LMG 7866 / NBRC 102419 / NCTC 12128 / CDC 0568-73)).